A 62-amino-acid polypeptide reads, in one-letter code: Large ribosomal subunit protein bL28 (62 aa).

The protein belongs to the bacterial ribosomal protein bL28 family.

This chain is Large ribosomal subunit protein bL28, found in Onion yellows phytoplasma (strain OY-M).